The following is a 248-amino-acid chain: MLKYSALFLYLIYVGGSESAHSRIVGGVPVAEEKVPYVVSIRMKEIHVCGGSILSESIVLTAAHCFDKSKGYSNYAVFAGSNRLSGGLKVEIQNITIHPKYIGPSDWWKNDLAVVKLKKPLNFSKSVRTVKIFPSYVPENETVYAYGWGKTIVPFFTLPNVLQKLETKALNLTACQKSWKEHVVESQLCLWTGHGTGVGLCKADSGGPVVYKGKLVGVISWVQVHCNTKKPDVAVRLSPYFENGLRKR.

Residues 1-19 form the signal peptide; that stretch reads MLKYSALFLYLIYVGGSES. The Peptidase S1 domain occupies 24–248; it reads IVGGVPVAEE…PYFENGLRKR (225 aa). Cysteine 49 and cysteine 65 are joined by a disulfide. Catalysis depends on charge relay system residues histidine 64 and aspartate 111. 2 disulfides stabilise this stretch: cysteine 175/cysteine 189 and cysteine 201/cysteine 226. Serine 205 functions as the Charge relay system in the catalytic mechanism.

It belongs to the peptidase S1 family. In terms of tissue distribution, expressed in salivary glands.

The protein resides in the secreted. Its function is as follows. Serine protease that inhibits blood coagulation in a dose-dependent manner. May act by destroying coagulant factors to inhibit blood coagulation. The sequence is that of Tabserin from Tabanus yao (Horsefly).